A 387-amino-acid chain; its full sequence is Methyltransferase phomM' (387 aa).

The methyltransferase domain stretch occupies residues 98–223 (PHRPKDLHIL…QSVADLFTTL (126 aa)).

It belongs to the class I-like SAM-binding methyltransferase superfamily. Erg6/SMT family.

It functions in the pathway mycotoxin biosynthesis. Functionally, methyltransferase; part of the gene cluster that mediates the biosynthesis of the phomopsins, a group of hexapeptide mycotoxins which infects lupins and causes lupinosis disease in livestock. Within the pathway, phomM' acts as an S-adenosylmethionine-dependent alpha-N-methyltransferase that catalyzes two successive N-methylation reactions, converting N-desmethyl-phomopsin A to phomopsin A and phomopsin A further to an N,N-dimethylated congener called phomopsin E. The pathway starts with the processing of the precursor phomA' by several endopeptidases including kexin proteases as well as the cluster-specific S41 family peptidase phomP1 and the oligopeptidase phomG' to produce 10 identical copies of the hexapeptide Tyr-Val-Ile-Pro-Ile-Asp. After being excised from the precursor peptide, the core peptides are cyclized and modified post-translationally by enzymes encoded within the gene cluster. The timing and order of proteolysis of the phomA' precursor and PTMs are still unknown. Two tyrosinase-like enzymes, phomQ1' and phomQ2, catalyze the chlorination and hydroxylation of Tyr, respectively. PhomYb, is proposed to be involved in the construction of the macrocyclic structure. The other 4 ustYa family proteins may be involved in PTMs that generate the unique structure of phomopsin A. PhomYa' is required for the hydroxylation of C-beta of Tyr. PhomYc', phomYd', and phomYe are responsible for the biosynthesis of 2,3-dehydroisoleucine (dIle), 2,3-dehydroaspartic acid (dAsp), and 3,4-dehydroproline (dPro), respectively. While dIle formation by phomYc' is indispensable for the installation of dAsp by phomYd', the order of the other PTMs have not been elucidated yet. Most of the biosynthetic enzymes likely have broad substrate specificity, and thus, there might be a metabolic grid from a precursor to phomopsin A. The enzyme(s) responsible for the biosynthesis of 3,4-dehydrovaline (dVal) have also not been identified yet. Finally, phomM' acts as an S-adenosylmethionine-dependent alpha-N-methyltransferase that catalyzes two successive N-methylation reactions, converting N-desmethyl-phomopsin A to phomopsin A and phomopsin A further to an N,N-dimethylated congener called phomopsin E. This Diaporthe leptostromiformis (Lupinosis disease fungus) protein is Methyltransferase phomM'.